The primary structure comprises 147 residues: Flagellar assembly factor FliW (147 aa).

The protein belongs to the FliW family. As to quaternary structure, interacts with translational regulator CsrA and flagellin(s).

It localises to the cytoplasm. Functionally, acts as an anti-CsrA protein, binds CsrA and prevents it from repressing translation of its target genes, one of which is flagellin. Binds to flagellin and participates in the assembly of the flagellum. This Oceanobacillus iheyensis (strain DSM 14371 / CIP 107618 / JCM 11309 / KCTC 3954 / HTE831) protein is Flagellar assembly factor FliW.